A 512-amino-acid polypeptide reads, in one-letter code: Chlorogenic acid esterase (512 aa).

The N-terminal stretch at 1 to 18 is a signal peptide; it reads MLLRLCIIATLLVSHCVA. N-linked (GlcNAc...) asparagine glycans are attached at residues Asn-47, Asn-80, and Asn-98. Cys-92 and Cys-120 are disulfide-bonded. The active-site Acyl-ester intermediate is the Ser-230. Asn-271 carries N-linked (GlcNAc...) asparagine glycosylation. A disulfide bridge links Cys-281 with Cys-292. Asn-295, Asn-322, and Asn-328 each carry an N-linked (GlcNAc...) asparagine glycan. Catalysis depends on Glu-351, which acts as the Charge relay system. 2 N-linked (GlcNAc...) asparagine glycosylation sites follow: Asn-391 and Asn-402. The Charge relay system role is filled by His-416. Residue Asn-474 is glycosylated (N-linked (GlcNAc...) asparagine).

The protein belongs to the type-B carboxylesterase/lipase family.

The protein localises to the secreted. The catalysed reaction is chlorogenate + H2O = L-quinate + (E)-caffeate + H(+). Functionally, extracellular chlorogenic acid esterase that releases caffeic acid from chlorogenic acid (CGA) contained in natural substrates such as apple marc and coffee pulp. Shows no activity towards 5-O-p-coumaroyl quinic acid, another quinic ester derivative, and rosmarinic acid, another caffeic ester derivative. The sequence is that of Chlorogenic acid esterase from Aspergillus niger.